A 671-amino-acid chain; its full sequence is Anti-sigma-I factor RsgI2 (671 aa).

At Met1–Lys57 the chain is on the cytoplasmic side. The RsgI N-terminal anti-sigma domain maps to Tyr4 to Gly51. Residues Ser58–Phe78 form a helical membrane-spanning segment. At Ser79–Pro671 the chain is on the extracellular side. Disordered regions lie at residues Thr290 to Thr323 and Pro359 to Glu505. Over residues Pro359 to Pro379 the composition is skewed to low complexity. Residues Glu380 to Thr400 show a composition bias toward pro residues. The span at Pro401–Pro425 shows a compositional bias: low complexity. A compositionally biased stretch (pro residues) spans Ala426–Thr446. Over residues Pro447 to Pro491 the composition is skewed to low complexity. Residues Thr492–Ala502 are compositionally biased toward pro residues. A CBM3 domain is found at Leu508 to Pro671. Ca(2+) is bound by residues Thr554, Asp556, Asp637, Ser640, and Asp641.

Interacts (via RsgI N-terminal anti-sigma domain) with SigI2.

Its subcellular location is the cell membrane. Its function is as follows. Anti-sigma factor for SigI2. Negatively regulates SigI2 activity through direct interaction. Binding of the polysaccharide substrate to the extracellular C-terminal sensing domain of RsgI2 may induce a conformational change in its N-terminal cytoplasmic region, leading to the release and activation of SigI2. The chain is Anti-sigma-I factor RsgI2 from Acetivibrio thermocellus (strain ATCC 27405 / DSM 1237 / JCM 9322 / NBRC 103400 / NCIMB 10682 / NRRL B-4536 / VPI 7372) (Clostridium thermocellum).